We begin with the raw amino-acid sequence, 600 residues long: Pyranose dehydrogenase 3 (600 aa).

The N-terminal stretch at 1 to 25 (MLPRVARLNTHLVSLALLGFQITYG) is a signal peptide. N-linked (GlcNAc...) asparagine glycans are attached at residues N99 and N114. Tele-8alpha-FAD histidine is present on H127. N-linked (GlcNAc...) asparagine glycans are attached at residues N173, N199, N275, N342, N399, and N507. The Proton acceptor role is filled by H535. N-linked (GlcNAc...) asparagine glycosylation is present at N546. H579 is a catalytic residue.

This sequence belongs to the GMC oxidoreductase family. In terms of assembly, monomer. FAD is required as a cofactor. N-glycosylated.

It is found in the secreted. It catalyses the reaction pyranose + acceptor = pyranos-2-ulose + reduced acceptor.. The catalysed reaction is pyranose + acceptor = pyranos-3-ulose + reduced acceptor.. It carries out the reaction pyranose + acceptor = pyranos-2,3-diulose + reduced acceptor.. The enzyme catalyses a pyranoside + acceptor = a pyranosid-3-ulose + reduced acceptor.. It catalyses the reaction a pyranoside + acceptor = a pyranosid-3,4-diulose + reduced acceptor.. Its function is as follows. Catalyzes the single-oxidation or sequential double oxidation reaction of carbohydrates primarily at carbon-2 and/or carbon-3 with the concomitant reduction of the flavin. The enzyme exhibits a broad sugar substrate specificity, oxidizing different aldopyranoses to the corresponding C-1, C-2, C-3 or C-1,2, C-2,3 and C-3,4 (di)dehydro sugars with substrate-specific regioselectivity. Accepts only a narrow range of electron acceptors such as substituted benzoquinones and complexed metal ions and reacts extremely slowly with O(2) as acceptor. May play a role in the natural recycling of plant matter by oxidizing all major monosaccharides in lignocellulose and by reducing quinone compounds or reactive radical species generated during lignin depolymerization. This is Pyranose dehydrogenase 3 from Leucoagaricus meleagris (Western flat-topped agaric).